A 318-amino-acid polypeptide reads, in one-letter code: NADH-ubiquinone oxidoreductase chain 1 (318 aa).

8 helical membrane passes run 2–22, 69–89, 100–120, 146–166, 171–191, 223–243, 253–273, and 294–314; these read FMINVLSLIIPILLAVAFLTL, LMFIMAPILALTLALTMWIPL, LGVLFMLAMSSLAVYSILWSG, LAIILLSVLLMNGSFTLAMLI, YMWLIIPAWPLAMMWFISTLA, FFLAEYANIIMMNILTTILFF, ELYTINFTVKTLLLTTTFLWI, and LPLTLALCMWHVSLPIITASI.

This sequence belongs to the complex I subunit 1 family. Core subunit of respiratory chain NADH dehydrogenase (Complex I) which is composed of 45 different subunits.

The protein resides in the mitochondrion inner membrane. It catalyses the reaction a ubiquinone + NADH + 5 H(+)(in) = a ubiquinol + NAD(+) + 4 H(+)(out). Core subunit of the mitochondrial membrane respiratory chain NADH dehydrogenase (Complex I) which catalyzes electron transfer from NADH through the respiratory chain, using ubiquinone as an electron acceptor. Essential for the catalytic activity and assembly of complex I. This chain is NADH-ubiquinone oxidoreductase chain 1 (MT-ND1), found in Felis catus (Cat).